Consider the following 305-residue polypeptide: Type II restriction enzyme SsoII (305 aa).

It catalyses the reaction Endonucleolytic cleavage of DNA to give specific double-stranded fragments with terminal 5'-phosphates.. Its function is as follows. A P subtype restriction enzyme that recognizes the double-stranded sequence 5'-CCNGG-3' and cleaves before C-1. This chain is Type II restriction enzyme SsoII (ssoIIR), found in Shigella sonnei.